Reading from the N-terminus, the 118-residue chain is Small integral membrane protein 17 (118 aa).

A disordered region spans residues 1–84 (MQSLRPEQTR…DDESEGSQGF (84 aa)). Over residues 13–42 (LEPERTKTLLPRESRAWEKPPHPACTKDWE) the composition is skewed to basic and acidic residues. The chain crosses the membrane as a helical span at residues 96 to 116 (IVLVVCVLFLFLVLTGMPMMF).

It localises to the membrane. This chain is Small integral membrane protein 17 (SMIM17), found in Homo sapiens (Human).